The sequence spans 1162 residues: Eukaryotic translation initiation factor 2-alpha kinase (1162 aa).

A signal peptide spans 1–39; that stretch reads MQDDLDGIVRHRRRSLSFLQIVTLTMAGLVAFDPAQVLA. The Lumenal segment spans residues 40–537; it reads GHPTTDSELQ…DDIDAPVKVV (498 aa). Asparagine 193, asparagine 260, asparagine 353, asparagine 461, asparagine 505, and asparagine 516 each carry an N-linked (GlcNAc...) asparagine glycan. The tract at residues 498–517 is disordered; that stretch reads TAPTSPTNATSEGTEATGNH. Residues 499–517 show a composition bias toward polar residues; the sequence is APTSPTNATSEGTEATGNH. A helical transmembrane segment spans residues 538-558; sequence ILSLWFWWKEIVVIAFTSAVI. Over 559 to 1162 the chain is Cytoplasmic; sequence LNIFMGQRNQ…TFSSSSEPHQ (604 aa). A Phosphoserine modification is found at serine 624. Residues 642-1130 form the Protein kinase domain; sequence FELMQCLGRG…LRNILQLPHL (489 aa). ATP contacts are provided by residues 648–656 and lysine 671; that span reads LGRGGFGVV. Serine 797 bears the Phosphoserine mark. The segment at 801 to 839 is disordered; that stretch reads FRSESQSAALRAEEEDDTDDDYEEDEEQQGDHEKRHRSS. The segment covering 813–828 has biased composition (acidic residues); sequence EEEDDTDDDYEEDEEQ. Phosphothreonine is present on threonine 818. Aspartate 980 functions as the Proton acceptor in the catalytic mechanism. Threonine 1028 is modified (phosphothreonine). The tract at residues 1135 to 1162 is disordered; that stretch reads QSEQAELAERARRLSRSRTFSSSSEPHQ. Positions 1151–1162 are enriched in low complexity; sequence SRTFSSSSEPHQ.

Belongs to the protein kinase superfamily. Ser/Thr protein kinase family. GCN2 subfamily. Forms dimers with HSPA5/BIP in resting cells. Oligomerizes in ER-stressed cells. Autophosphorylated. In terms of processing, N-glycosylated.

It localises to the endoplasmic reticulum membrane. It catalyses the reaction L-seryl-[protein] + ATP = O-phospho-L-seryl-[protein] + ADP + H(+). The catalysed reaction is L-threonyl-[protein] + ATP = O-phospho-L-threonyl-[protein] + ADP + H(+). With respect to regulation, perturbation in protein folding in the endoplasmic reticulum (ER) promotes reversible dissociation from HSPA5/BIP and oligomerization, resulting in transautophosphorylation and kinase activity induction. Phosphorylates the alpha subunit of eukaryotic translation-initiation factor 2 (EIF2), leading to its inactivation and thus to a rapid reduction of translational initiation and repression of global protein synthesis. In Drosophila melanogaster (Fruit fly), this protein is Eukaryotic translation initiation factor 2-alpha kinase (PEK).